The sequence spans 417 residues: Acetyltransferase cdmC (417 aa).

Asparagine 64 is a glycosylation site (N-linked (GlcNAc...) asparagine). The next 3 membrane-spanning stretches (helical) occupy residues 308-328 (IPDG…GYLV), 357-377 (GIFW…YPLL), and 389-409 (LVES…AFIL).

It belongs to the wax synthase family.

The protein localises to the membrane. The enzyme catalyses chrodrimanin A + acetyl-CoA = chrodrimanin B + CoA. The protein operates within secondary metabolite biosynthesis; terpenoid biosynthesis. Its function is as follows. Acetyltransferase; part of the gene cluster that mediates the biosynthesis of chrodrimanin B, a meroterpenoid that acts as a potent blocker of insect GABA-gated chloride channels. The first step of the pathway is the biosynthesis of 6-hydroxymellein by the polyketide synthase cdmE. The prenyltransferase cdmH acts as a 6-hydroxymellein 5-farnesyltransferase and produces the hydrophobic metabolite verruculide C. The FAD-dependent monooxygenase cdmI further converts verruculide C into verruculide B. The terpene cyclase cdmG then produced the pentacyclic molecule 3-hydroxypentacecilide A, the backbone structure of chrodrimanin B, via folding the farnesyl moiety of the substrate into the chair-boat conformation. The short-chain dehydrogenase/reductase cdmF functions as the 3-OH dehydrogenase that oxidizes the C-3 hydroxyl group of 3-hydroxypentacecilide A and produces chrodrimanin C, the dehydrogenated product of 3-hydroxypentacecilide A. The cytochrome P450 monooxygenase cdmJ then accepts both 3-hydroxypentacecilide A and chrodrimanin C and functions as a C-7-beta-hydroxylase to produce respectively chrodrimanin H and chrodrimanin F. The dioxygenase cdmA accepts chrodrimanin H to afford chrodrimanin E, which is further transformed to chrodrimanin A by the dioxygenase cdmD. CdmA can also accept chrodrimanin C as substrate to convert it into verruculide A, which is further converted into chrodrimanin T by cdmD. The last step of the biosynthesis is proposed to be performed by the acetyltransferase cdmC which acetylates chrodrimanin A to yield chrodrimanin B. The pathway may also lead to the production of additional shunt products, including chrodrimanins T and U. This chain is Acetyltransferase cdmC, found in Talaromyces verruculosus (Penicillium verruculosum).